A 174-amino-acid polypeptide reads, in one-letter code: Transcription factor bHLH36 (174 aa).

The bHLH domain occupies methionine 1–leucine 53.

Homodimer. In terms of tissue distribution, expressed constitutively in roots, leaves, stems, and flowers.

The protein localises to the nucleus. The chain is Transcription factor bHLH36 (BHLH36) from Arabidopsis thaliana (Mouse-ear cress).